The chain runs to 375 residues: 4,4'-diaponeurosporenoate glycosyltransferase (375 aa).

Transmembrane regions (helical) follow at residues 7 to 23 (LLHA…YLMY), 112 to 132 (ACYL…DADV), 280 to 300 (IMML…GLAL), and 333 to 353 (FSIL…LVYI).

This sequence belongs to the glycosyltransferase 2 family. CrtQ subfamily.

It localises to the cell membrane. It functions in the pathway carotenoid biosynthesis; staphyloxanthin biosynthesis; staphyloxanthin from farnesyl diphosphate: step 4/5. Catalyzes the glycosylation of 4,4'-diaponeurosporenoate, i.e. the esterification of glucose at the C1'' position with the carboxyl group of 4,4'-diaponeurosporenic acid, to form glycosyl-4,4'-diaponeurosporenoate. This is a step in the biosynthesis of staphyloxanthin, an orange pigment present in most staphylococci strains. This is 4,4'-diaponeurosporenoate glycosyltransferase (crtQ) from Staphylococcus haemolyticus (strain JCSC1435).